We begin with the raw amino-acid sequence, 121 residues long: Large ribosomal subunit protein uL18 (121 aa).

This sequence belongs to the universal ribosomal protein uL18 family. In terms of assembly, part of the 50S ribosomal subunit; part of the 5S rRNA/L5/L18/L25 subcomplex. Contacts the 5S and 23S rRNAs.

This is one of the proteins that bind and probably mediate the attachment of the 5S RNA into the large ribosomal subunit, where it forms part of the central protuberance. The sequence is that of Large ribosomal subunit protein uL18 from Paraburkholderia phymatum (strain DSM 17167 / CIP 108236 / LMG 21445 / STM815) (Burkholderia phymatum).